Consider the following 242-residue polypeptide: DNA repair protein RecO (242 aa).

Belongs to the RecO family. In terms of assembly, monomer.

Involved in DNA repair and RecF pathway recombination. This Salmonella schwarzengrund (strain CVM19633) protein is DNA repair protein RecO.